The following is a 433-amino-acid chain: MKIKTNKINSANAQIEAEIPRTTIDANIEKIAKNLTKTASVQGFRKGKVPVTVIKKQYGERLIQDAEAEALREVLNKGLDELKVAMSALIGEPNISKFDKSDDKIEVTVKIAMRPEINLENYADMVAPFKKPVISDKEVEDRLEKLADSQGKFVDLKKKRAAKDGDSAIIDFEGSIDGELFEGGAAQEFALVLGSNQFISGFEEQVVGMKIGEEKVIKVTFPESYGSEKLAGKDAEFKVTLHNIQEKVKVEIDEAFAAKMLAGQDDKSLENLRAQIKLQLENEALAKLYNEELKSALLETYVEKINFDLPEFVVEQEIDVSLNRKASTMSEDEIKELRENADKLQELRETFRLDAQKSVKATFIIDALATKEKVRVDENEVMQTIYYEAMQMGQDPRLAYDKYKNAGYLPAIQMSMVEDKVLTQILNSKIKEA.

The 86-residue stretch at 165 to 250 folds into the PPIase FKBP-type domain; it reads GDSAIIDFEG…LHNIQEKVKV (86 aa).

This sequence belongs to the FKBP-type PPIase family. Tig subfamily.

Its subcellular location is the cytoplasm. It carries out the reaction [protein]-peptidylproline (omega=180) = [protein]-peptidylproline (omega=0). Its function is as follows. Involved in protein export. Acts as a chaperone by maintaining the newly synthesized protein in an open conformation. Functions as a peptidyl-prolyl cis-trans isomerase. The sequence is that of Trigger factor from Sulfurimonas denitrificans (strain ATCC 33889 / DSM 1251) (Thiomicrospira denitrificans (strain ATCC 33889 / DSM 1251)).